A 155-amino-acid polypeptide reads, in one-letter code: Protein-export protein SecB (155 aa).

It belongs to the SecB family. In terms of assembly, homotetramer, a dimer of dimers. One homotetramer interacts with 1 SecA dimer.

Its subcellular location is the cytoplasm. Functionally, one of the proteins required for the normal export of preproteins out of the cell cytoplasm. It is a molecular chaperone that binds to a subset of precursor proteins, maintaining them in a translocation-competent state. It also specifically binds to its receptor SecA. This is Protein-export protein SecB from Vibrio vulnificus (strain CMCP6).